The chain runs to 345 residues: Probable velvet family sexual development regulator LACBIDRAFT_317102 (345 aa).

Composition is skewed to polar residues over residues 1–13 (MFTTHPQGRSYRS) and 24–38 (EIQNSYDQHANNPPR). 3 disordered regions span residues 1 to 43 (MFTT…TRRR), 138 to 189 (ESWT…SPSS), and 310 to 345 (RKRRKKGEIGSPLDDPKSKRKRTSLGSEDDEASDED). In terms of domain architecture, Velvet spans 62–306 (GQTIRAELDE…ARWGVRLNIR (245 aa)). 2 stretches are compositionally biased toward low complexity: residues 141–158 (TSRSPTQTSFSSSSPTLS) and 167–184 (SSPQTSSPTAAQSQASTP). The span at 336-345 (SEDDEASDED) shows a compositional bias: acidic residues.

Belongs to the velvet family.

Its subcellular location is the nucleus. Its function is as follows. Velvet-domain-containing protein that probably acts as a positive regulator of sexual development. This chain is Probable velvet family sexual development regulator LACBIDRAFT_317102, found in Laccaria bicolor (strain S238N-H82 / ATCC MYA-4686) (Bicoloured deceiver).